The sequence spans 399 residues: Subtilisin-like protease 1 (399 aa).

An N-terminal signal peptide occupies residues Met1 to Ala19. The propeptide occupies Ala20–His116. Residues Ser34–Val115 form the Inhibitor I9 domain. Positions Ser126–Ala399 constitute a Peptidase S8 domain. Active-site charge relay system residues include Asp158 and His190. A disordered region spans residues Gly175 to Met198. The N-linked (GlcNAc...) asparagine glycan is linked to Asn251. A compositionally biased stretch (polar residues) spans Asn282–Ser294. The tract at residues Asn282–Ser312 is disordered. Catalysis depends on Ser345, which acts as the Charge relay system.

This sequence belongs to the peptidase S8 family.

The protein localises to the secreted. Secreted subtilisin-like serine protease with keratinolytic activity that contributes to pathogenicity. This chain is Subtilisin-like protease 1 (SUB1), found in Arthroderma benhamiae (Trichophyton mentagrophytes).